The following is a 278-amino-acid chain: Shikimate dehydrogenase (NADP(+)) (278 aa).

Shikimate-binding positions include 18 to 20 and threonine 65; that span reads SRS. Catalysis depends on lysine 69, which acts as the Proton acceptor. Glutamate 80 contributes to the NADP(+) binding site. Shikimate is bound by residues asparagine 89 and aspartate 104. Residues 129-133 and leucine 218 each bind NADP(+); that span reads GAGGS. Tyrosine 220 is a shikimate binding site. Glycine 241 contributes to the NADP(+) binding site.

The protein belongs to the shikimate dehydrogenase family. Homodimer.

The catalysed reaction is shikimate + NADP(+) = 3-dehydroshikimate + NADPH + H(+). It participates in metabolic intermediate biosynthesis; chorismate biosynthesis; chorismate from D-erythrose 4-phosphate and phosphoenolpyruvate: step 4/7. Its function is as follows. Involved in the biosynthesis of the chorismate, which leads to the biosynthesis of aromatic amino acids. Catalyzes the reversible NADPH linked reduction of 3-dehydroshikimate (DHSA) to yield shikimate (SA). In Rhodopseudomonas palustris (strain ATCC BAA-98 / CGA009), this protein is Shikimate dehydrogenase (NADP(+)).